The sequence spans 174 residues: Bifunctional protein PyrR (174 aa).

Substrate contacts are provided by residues 38-39 (SG), 95-103 (DDVLATGRT), and Arg128. A PRPP-binding motif is present at residues 91–103 (ILLVDDVLATGRT).

It belongs to the purine/pyrimidine phosphoribosyltransferase family. PyrR subfamily.

It carries out the reaction UMP + diphosphate = 5-phospho-alpha-D-ribose 1-diphosphate + uracil. Its function is as follows. Regulates the transcription of the pyrimidine nucleotide (pyr) operon in response to exogenous pyrimidines. Also displays a weak uracil phosphoribosyltransferase activity which is not physiologically significant. The polypeptide is Bifunctional protein PyrR (Ralstonia nicotianae (strain ATCC BAA-1114 / GMI1000) (Ralstonia solanacearum)).